An 82-amino-acid chain; its full sequence is Small ribosomal subunit protein bS18 (82 aa).

The segment at 1–20 is disordered; it reads MVDINQIPTRRPFHRRRKTC.

It belongs to the bacterial ribosomal protein bS18 family. As to quaternary structure, part of the 30S ribosomal subunit. Forms a tight heterodimer with protein bS6.

Binds as a heterodimer with protein bS6 to the central domain of the 16S rRNA, where it helps stabilize the platform of the 30S subunit. The protein is Small ribosomal subunit protein bS18 of Brucella abortus (strain 2308).